A 236-amino-acid chain; its full sequence is Ascorbate-specific transmembrane electron transporter 1 (236 aa).

Topologically, residues 1-11 (MGLGLGVRAAP) are cytoplasmic. Residues 12-32 (FTYAAHALAVAAAAMVLVWSI) traverse the membrane as a helical segment. The region spanning 15–219 (AAHALAVAAA…FGASVVVAAI (205 aa)) is the Cytochrome b561 domain. Residues 33–50 (QFRGGLAIESTNKNLIFN) lie on the Extracellular side of the membrane. A helical membrane pass occupies residues 51-71 (VHPVLMLIGYVIIGGEAIMVY). His52 provides a ligand contact to heme b. 67–75 (AIMVYRVLP) provides a ligand contact to L-ascorbate. Residues 72–84 (RVLPTSNHDTTKL) lie on the Cytoplasmic side of the membrane. A helical membrane pass occupies residues 85–105 (IHLILHGIALVLGAVGIYFAF). Residues His86 and His120 each contribute to the heme b site. Residues 106-122 (KNHNESGIANLYSLHSW) are Extracellular-facing. Residue 116–125 (LYSLHSWIGI) participates in monodehydro-L-ascorbate radical binding. A helical membrane pass occupies residues 123-143 (IGIGTITLYGIQWIIGFVTFF). At 144-153 (FPGAAPNVKK) the chain is on the cytoplasmic side. Residues 154–174 (GVLPWHVLFGLFVYILALANA) traverse the membrane as a helical segment. Position 159 (His159) interacts with heme b. The Extracellular portion of the chain corresponds to 175 to 201 (ELGFLEKLTFLESSGLDKYGTEAFLVN). Residues 202-222 (FTALVVVLFGASVVVAAIAPV) form a helical membrane-spanning segment. Residues 223 to 236 (RLEEPQGYDPIPEN) lie on the Cytoplasmic side of the membrane.

Heme b is required as a cofactor.

Its subcellular location is the membrane. With respect to regulation, inhibited by diethylpyrocarbonate. Functionally, two-heme-containing cytochrome. Catalyzes ascorbate-dependent trans-membrane electron transfer by utilizing a concerted H(+)/e(-) transfer mechanism. This chain is Ascorbate-specific transmembrane electron transporter 1 (ZCYB), found in Zea mays (Maize).